Reading from the N-terminus, the 299-residue chain is 4-hydroxybenzoate octaprenyltransferase (299 aa).

8 consecutive transmembrane segments (helical) span residues 33-53 (VGFLLLLWPTWWALWLAAGGV), 56-76 (WWTLCVFTTGIWLTRSAGCVI), 107-127 (LLMFATLMLIAFGLVLTMNQL), 151-171 (LPQVYLGLAFGWGIPMAFAAI), 180-200 (WLLYVANILWTTAYDTWCAMV), 214-234 (AILFADLDLTVQGVLYTLMLF), 247-267 (HTYWISLIAAVALIGYQFIIA), and 278-298 (AFMHNNWVGMTIFAGIALATT).

The protein belongs to the UbiA prenyltransferase family. It depends on Mg(2+) as a cofactor.

It is found in the cell inner membrane. It carries out the reaction all-trans-octaprenyl diphosphate + 4-hydroxybenzoate = 4-hydroxy-3-(all-trans-octaprenyl)benzoate + diphosphate. Its pathway is cofactor biosynthesis; ubiquinone biosynthesis. In terms of biological role, catalyzes the prenylation of para-hydroxybenzoate (PHB) with an all-trans polyprenyl group. Mediates the second step in the final reaction sequence of ubiquinone-8 (UQ-8) biosynthesis, which is the condensation of the polyisoprenoid side chain with PHB, generating the first membrane-bound Q intermediate 3-octaprenyl-4-hydroxybenzoate. This is 4-hydroxybenzoate octaprenyltransferase from Xylella fastidiosa (strain 9a5c).